A 93-amino-acid polypeptide reads, in one-letter code: Small ribosomal subunit protein uS19 (93 aa).

A disordered region spans residues Gly72–Lys93. The segment covering Tyr80–Lys93 has biased composition (basic residues).

It belongs to the universal ribosomal protein uS19 family.

In terms of biological role, protein S19 forms a complex with S13 that binds strongly to the 16S ribosomal RNA. The polypeptide is Small ribosomal subunit protein uS19 (Aster yellows witches'-broom phytoplasma (strain AYWB)).